We begin with the raw amino-acid sequence, 669 residues long: Acetyl-coenzyme A synthetase (669 aa).

Residues 211–214 and threonine 329 contribute to the CoA site; that span reads RGGK. ATP-binding positions include 404-406, 428-433, aspartate 519, and arginine 534; these read GEP and DTYWQT. Residue serine 542 coordinates CoA. Arginine 545 is an ATP binding site. Arginine 602 is a binding site for CoA.

This sequence belongs to the ATP-dependent AMP-binding enzyme family.

It carries out the reaction acetate + ATP + CoA = acetyl-CoA + AMP + diphosphate. It participates in ketone degradation; acetoin degradation. It functions in the pathway antibiotic biosynthesis; penicillin biosynthesis. This Penicillium chrysogenum (Penicillium notatum) protein is Acetyl-coenzyme A synthetase (facA).